Consider the following 114-residue polypeptide: Cuticle protein CP1158 (114 aa).

Glutamine 1 carries the pyrrolidone carboxylic acid modification. A run of 4 repeats spans residues 1-17 (QVGY…NIQF), 26-43 (VLKG…NLQL), 70-87 (SVVG…VQFS), and 95-112 (VLVG…NLQL).

As to expression, calcified shell.

The chain is Cuticle protein CP1158 from Cancer pagurus (Rock crab).